The primary structure comprises 210 residues: Cancer/testis antigen 2 (210 aa).

2 stretches are compositionally biased toward gly residues: residues 1-47 and 56-66; these read MQAE…GPRG and PRGGAPRGPHG. 2 disordered regions span residues 1–80 and 154–197; these read MQAE…PCGA and GLGS…DGCR. Residues 163 to 177 are compositionally biased toward basic and acidic residues; the sequence is QKARDLRTPKHKVSE.

The protein belongs to the CTAG/PCC1 family. Testis and very low level in placenta and in some uterus samples. Observed in 25-50% of tumor samples of melanomas, non-small-cell lung carcinomas, bladder, prostate and head and neck cancers.

This Homo sapiens (Human) protein is Cancer/testis antigen 2 (CTAG2).